Here is a 113-residue protein sequence, read N- to C-terminus: U11-theraphotoxin-Hhn1g (113 aa).

The signal sequence occupies residues 1–21 (MNTVRVTFLLVFVLAVSLGQA). Positions 22 to 74 (DKDENRMEMQEKTEQGKSYLDFAENLLLQKLEELEAKLLEEDSEESRNSRQKR) are excised as a propeptide. The disordered stretch occupies residues 61 to 83 (EEDSEESRNSRQKRCIGEGVPCD). 3 cysteine pairs are disulfide-bonded: Cys-75-Cys-90, Cys-82-Cys-95, and Cys-89-Cys-110.

It belongs to the neurotoxin 14 (magi-1) family. 01 (HNTX-16) subfamily. Expressed by the venom gland.

Its subcellular location is the secreted. Functionally, probable ion channel inhibitor. The polypeptide is U11-theraphotoxin-Hhn1g (Cyriopagopus hainanus (Chinese bird spider)).